The sequence spans 449 residues: Anther-specific proline-rich protein APG (449 aa).

Residues 1–118 (PPKPQPKPPP…KPPAPSPPKP (118 aa)) are compositionally biased toward pro residues. Residues 1–123 (PPKPQPKPPP…SPPKPQNKTI (123 aa)) are disordered. Ser132 (nucleophile) is an active-site residue. Active-site residues include Asp425 and His428.

Belongs to the 'GDSL' lipolytic enzyme family. Found in anther, only in male fertile plants.

The protein is Anther-specific proline-rich protein APG (APG) of Brassica napus (Rape).